The chain runs to 241 residues: Ubiquinone biosynthesis O-methyltransferase (241 aa).

Arg-46, Gly-66, Asp-87, and Met-131 together coordinate S-adenosyl-L-methionine.

This sequence belongs to the methyltransferase superfamily. UbiG/COQ3 family.

The catalysed reaction is a 3-demethylubiquinol + S-adenosyl-L-methionine = a ubiquinol + S-adenosyl-L-homocysteine + H(+). It carries out the reaction a 3-(all-trans-polyprenyl)benzene-1,2-diol + S-adenosyl-L-methionine = a 2-methoxy-6-(all-trans-polyprenyl)phenol + S-adenosyl-L-homocysteine + H(+). It participates in cofactor biosynthesis; ubiquinone biosynthesis. Its function is as follows. O-methyltransferase that catalyzes the 2 O-methylation steps in the ubiquinone biosynthetic pathway. This chain is Ubiquinone biosynthesis O-methyltransferase, found in Bordetella pertussis (strain Tohama I / ATCC BAA-589 / NCTC 13251).